A 328-amino-acid chain; its full sequence is Complex I intermediate-associated protein 30, mitochondrial (328 aa).

A mitochondrion-targeting transit peptide spans 1–24 (MSSIHKLLTGIYIHKNFLRPRAAL). Residues 44 to 54 (VTSVDRASQQG) are compositionally biased toward polar residues. Positions 44–80 (VTSVDRASQQGKTEEGLQGHDHKEVALDAPSPDRTPE) are disordered. Residues 55–69 (KTEEGLQGHDHKEVA) show a composition bias toward basic and acidic residues. Position 319 is a phosphoserine (S319).

Belongs to the CIA30 family. In terms of assembly, part of the mitochondrial complex I assembly/MCIA complex that comprises at least the core subunits TMEM126B, NDUFAF1, ECSIT and ACAD9 and complement subunits such as COA1 and TMEM186. Interacts with ECSIT. Interacts with ACAD9. At early stages of complex I assembly, it is found in intermediate subcomplexes that contain different subunits including NDUFB6, NDUFA6, NDUFA9, NDUFS3, NDUFS7, ND1, ND2 and ND3. Interacts with TMEM70 and TMEM242.

The protein localises to the mitochondrion. It is found in the mitochondrion matrix. Functionally, as part of the MCIA complex, involved in the assembly of the mitochondrial complex I. The polypeptide is Complex I intermediate-associated protein 30, mitochondrial (Mus musculus (Mouse)).